Here is a 282-residue protein sequence, read N- to C-terminus: U1 small nuclear ribonucleoprotein A (282 aa).

A2 is subject to N-acetylalanine. The RRM 1 domain occupies 10 to 89; that stretch reads HTIYINNLNE…KPMRIQYAKT (80 aa). Residue K60 is modified to N6-acetyllysine. The disordered stretch occupies residues 101–141; it reads FVERDRKREKRKPKSQETPAAKKAVQGGAAAPVVGTVQGPV. Low complexity predominate over residues 119 to 141; that stretch reads PAAKKAVQGGAAAPVVGTVQGPV. R152 carries the omega-N-methylarginine modification. The region spanning 208–282 is the RRM 2 domain; that stretch reads HILFLTNLPE…NAMKISFAKK (75 aa).

This sequence belongs to the RRM U1 A/B'' family. In terms of assembly, U1 snRNP is composed of the 7 core Sm proteins SNRPB, SNRPD1, SNRPD2, SNRPD3, SNRPE, SNRPF and SNRPG that assemble in a heptameric protein ring on the Sm site of the small nuclear RNA to form the core snRNP, and at least three U1 snRNP-specific proteins SNRNP70/U1-70K, SNRPA/U1-A and SNRPC/U1-C. Interacts with SFPQ; component of a snRNP-free complex with SFPQ.

The protein resides in the nucleus. In terms of biological role, component of the spliceosomal U1 snRNP, which is essential for recognition of the pre-mRNA 5' splice-site and the subsequent assembly of the spliceosome. U1 snRNP is the first snRNP to interact with pre-mRNA. This interaction is required for the subsequent binding of U2 snRNP and the U4/U6/U5 tri-snRNP. SNRPA binds stem loop II of U1 snRNA. In a snRNP-free form (SF-A) may be involved in coupled pre-mRNA splicing and polyadenylation process. May bind preferentially to the 5'-UGCAC-3' motif on RNAs. The chain is U1 small nuclear ribonucleoprotein A (SNRPA) from Bos taurus (Bovine).